A 195-amino-acid chain; its full sequence is MGYIPYVIENTERGERSYDIYSRLLKDRIVLLSGEINDSVASSIVAQLLFLEAEDPEKDIGLYINSPGGVITSGLSIYDTMNFIRPDVSTICIGQAASMGAFLLSCGAKGKRFSLPHSRIMIHQPLGGAQGQASDIEIISNEILRLKGLMNSILAQNSGQSLEQIAKDTDRDFYMSAKEAKEYGLIDKVLQKNVK.

Catalysis depends on Ser-98, which acts as the Nucleophile. His-123 is a catalytic residue.

The protein belongs to the peptidase S14 family. In terms of assembly, fourteen ClpP subunits assemble into 2 heptameric rings which stack back to back to give a disk-like structure with a central cavity, resembling the structure of eukaryotic proteasomes.

Its subcellular location is the cytoplasm. The catalysed reaction is Hydrolysis of proteins to small peptides in the presence of ATP and magnesium. alpha-casein is the usual test substrate. In the absence of ATP, only oligopeptides shorter than five residues are hydrolyzed (such as succinyl-Leu-Tyr-|-NHMec, and Leu-Tyr-Leu-|-Tyr-Trp, in which cleavage of the -Tyr-|-Leu- and -Tyr-|-Trp bonds also occurs).. In terms of biological role, cleaves peptides in various proteins in a process that requires ATP hydrolysis. Has a chymotrypsin-like activity. Plays a major role in the degradation of misfolded proteins. The chain is ATP-dependent Clp protease proteolytic subunit from Helicobacter pylori (strain J99 / ATCC 700824) (Campylobacter pylori J99).